A 504-amino-acid chain; its full sequence is Histidine ammonia-lyase (504 aa).

A cross-link (5-imidazolinone (Ala-Gly)) is located at residues 141-143 (ASG). The residue at position 142 (Ser142) is a 2,3-didehydroalanine (Ser).

Belongs to the PAL/histidase family. Contains an active site 4-methylidene-imidazol-5-one (MIO), which is formed autocatalytically by cyclization and dehydration of residues Ala-Ser-Gly.

Its subcellular location is the cytoplasm. It carries out the reaction L-histidine = trans-urocanate + NH4(+). The protein operates within amino-acid degradation; L-histidine degradation into L-glutamate; N-formimidoyl-L-glutamate from L-histidine: step 1/3. The chain is Histidine ammonia-lyase from Geobacillus kaustophilus (strain HTA426).